The sequence spans 343 residues: 3-dehydroquinate synthase (343 aa).

NAD(+) is bound by residues 61–66 (SGEKYK), 95–99 (GVISD), 119–120 (TT), Lys132, Lys141, and 159–162 (FLKT). Zn(2+)-binding residues include Glu174, His231, and His248.

It belongs to the sugar phosphate cyclases superfamily. Dehydroquinate synthase family. Requires Co(2+) as cofactor. Zn(2+) serves as cofactor. It depends on NAD(+) as a cofactor.

Its subcellular location is the cytoplasm. The enzyme catalyses 7-phospho-2-dehydro-3-deoxy-D-arabino-heptonate = 3-dehydroquinate + phosphate. It participates in metabolic intermediate biosynthesis; chorismate biosynthesis; chorismate from D-erythrose 4-phosphate and phosphoenolpyruvate: step 2/7. Functionally, catalyzes the conversion of 3-deoxy-D-arabino-heptulosonate 7-phosphate (DAHP) to dehydroquinate (DHQ). The sequence is that of 3-dehydroquinate synthase from Helicobacter pylori (strain G27).